We begin with the raw amino-acid sequence, 413 residues long: Sulfoquinovose isomerase (413 aa).

Positions 55, 111, 172, 176, and 238 each coordinate 6-sulfo-beta-D-quinovose. Histidine 248 functions as the Proton donor/acceptor in the catalytic mechanism. 6-sulfo-beta-D-quinovose-binding residues include glutamate 251, glutamine 362, glutamine 379, and histidine 383. The active-site Proton donor/acceptor is the histidine 383.

Belongs to the N-acylglucosamine 2-epimerase family. In terms of assembly, homohexamer.

It carries out the reaction 6-sulfo-beta-D-quinovose = 6-deoxy-6-sulfo-D-fructose. It catalyses the reaction 6-sulfo-beta-D-quinovose = 6-sulfo-D-rhamnose. Its activity is regulated as follows. Significantly inhibited by Cu(2+), Fe(3+) and Co(2+). Partially inhibited by Mg(2+), Ca(2+) and Mn(2+). Also inhibited by ATP, ADP, dATP, TTP and GTP. Functionally, catalyzes the isomerization of sulfoquinovose (SQ) to 6-deoxy-6-sulfo-D-fructose (SF). Can also catalyze the interconversion of SQ and sulforhamnose (SR). Has a clear preference for beta-SQ and little-to-no activity on alpha-SQ. In vitro, can also catalyze the interconversion of mannose, fructose and glucose, or lyxose and xylulose, but has extremely low activity with glucose. The sequence is that of Sulfoquinovose isomerase (yihS) from Escherichia coli (strain K12).